Reading from the N-terminus, the 1172-residue chain is Lysylphosphatidylglycerol biosynthesis bifunctional protein LysX (1172 aa).

The interval 1–34 is disordered; it reads MGLHLTVPGLRRDGRGVQSNSHDTSSKTTADISR. Residues 1-663 form a phosphatidylglycerol lysyltransferase region; sequence MGLHLTVPGL…LLHHDGSAPD (663 aa). Residues 17–31 are compositionally biased toward polar residues; it reads VQSNSHDTSSKTTAD. 7 helical membrane passes run 80–100, 122–142, 146–166, 177–197, 214–234, 272–292, and 612–632; these read VPAA…LASV, FPDT…ALTA, IAWL…AAEI, FGEN…VLGY, AVWL…VELF, AIFG…LFLS, and VIPR…LPFS. Residues 664–1172 are lysine--tRNA ligase; sequence VSGLRQVGLT…TLPFPLAKPH (509 aa). Residues 726 to 804 constitute a DNA-binding region (OB); that stretch reads VSVSGRIMRI…SLIVSGWRLI (79 aa). Residues D1084 and E1091 each contribute to the Mg(2+) site.

This sequence in the N-terminal section; belongs to the LPG synthetase family. The protein in the C-terminal section; belongs to the class-II aminoacyl-tRNA synthetase family. Mg(2+) serves as cofactor.

The protein localises to the cell membrane. The enzyme catalyses tRNA(Lys) + L-lysine + ATP = L-lysyl-tRNA(Lys) + AMP + diphosphate. It carries out the reaction L-lysyl-tRNA(Lys) + a 1,2-diacyl-sn-glycero-3-phospho-(1'-sn-glycerol) = a 1,2-diacyl-sn-glycero-3-phospho-1'-(3'-O-L-lysyl)-sn-glycerol + tRNA(Lys). In terms of biological role, catalyzes the production of L-lysyl-tRNA(Lys)transfer and the transfer of a lysyl group from L-lysyl-tRNA(Lys) to membrane-bound phosphatidylglycerol (PG), which produces lysylphosphatidylglycerol (LPG), one of the components of the bacterial membrane with a positive net charge. LPG synthesis contributes to the resistance to cationic antimicrobial peptides (CAMPs) and likely protects M.tuberculosis against the CAMPs produced by competiting microorganisms (bacteriocins). In fact, the modification of anionic phosphatidylglycerol with positively charged L-lysine results in repulsion of the peptides. This Mycobacterium tuberculosis (strain F11) protein is Lysylphosphatidylglycerol biosynthesis bifunctional protein LysX (lysX).